A 313-amino-acid chain; its full sequence is Homoserine O-succinyltransferase (313 aa).

Cys-142 acts as the Acyl-thioester intermediate in catalysis. Residues Lys-163 and Ser-192 each contribute to the substrate site. The active-site Proton acceptor is the His-235. Glu-237 is a catalytic residue. Residue Arg-249 coordinates substrate.

Belongs to the MetA family.

The protein localises to the cytoplasm. It carries out the reaction L-homoserine + succinyl-CoA = O-succinyl-L-homoserine + CoA. It functions in the pathway amino-acid biosynthesis; L-methionine biosynthesis via de novo pathway; O-succinyl-L-homoserine from L-homoserine: step 1/1. Transfers a succinyl group from succinyl-CoA to L-homoserine, forming succinyl-L-homoserine. The chain is Homoserine O-succinyltransferase from Shewanella baltica (strain OS223).